A 285-amino-acid polypeptide reads, in one-letter code: Pantothenate synthetase (285 aa).

30-37 contributes to the ATP binding site; the sequence is MGNLHAGH. The active-site Proton donor is histidine 37. (R)-pantoate is bound at residue glutamine 61. Glutamine 61 contacts beta-alanine. Residue 149–152 coordinates ATP; it reads GEKD. Glutamine 155 lines the (R)-pantoate pocket. 186–189 lines the ATP pocket; the sequence is LSSR.

Belongs to the pantothenate synthetase family. Homodimer.

Its subcellular location is the cytoplasm. The catalysed reaction is (R)-pantoate + beta-alanine + ATP = (R)-pantothenate + AMP + diphosphate + H(+). It participates in cofactor biosynthesis; (R)-pantothenate biosynthesis; (R)-pantothenate from (R)-pantoate and beta-alanine: step 1/1. Functionally, catalyzes the condensation of pantoate with beta-alanine in an ATP-dependent reaction via a pantoyl-adenylate intermediate. In Ectopseudomonas mendocina (strain ymp) (Pseudomonas mendocina), this protein is Pantothenate synthetase.